We begin with the raw amino-acid sequence, 294 residues long: Non-selective voltage-gated ion channel VDAC2 (294 aa).

At Ala2 the chain carries N-acetylalanine. Residues Lys23 and Lys31 each coordinate ATP. Position 31 is an N6-acetyllysine; alternate (Lys31). Position 31 is an N6-succinyllysine; alternate (Lys31). A Glycyl lysine isopeptide (Lys-Gly) (interchain with G-Cter in ubiquitin); alternate cross-link involves residue Lys31. A run of 2 beta stranded transmembrane segments spans residues Leu37–Ser46 and Val50–Ser58. A Glycyl lysine isopeptide (Lys-Gly) (interchain with G-Cter in ubiquitin) cross-link involves residue Lys64. Residues Val65–Trp75 form a beta stranded membrane-spanning segment. Tyr78 carries the post-translational modification Phosphotyrosine. 3 beta stranded membrane passes run Leu80–Asn87, Thr91–Asp100, and Leu106–Ser115. Residue Thr118 is modified to Phosphothreonine. An N6-acetyllysine; alternate modification is found at Lys120. Lys120 participates in a covalent cross-link: Glycyl lysine isopeptide (Lys-Gly) (interchain with G-Cter in ubiquitin); alternate. Residue Lys121 forms a Glycyl lysine isopeptide (Lys-Gly) (interchain with G-Cter in ubiquitin) linkage. 4 beta stranded membrane passes run Ser122 to Arg131, Ile134 to Asp141, Ala148 to Gly156, and Leu161 to Asp169. Residue Lys172 forms a Glycyl lysine isopeptide (Lys-Gly) (interchain with G-Cter in ubiquitin) linkage. 6 beta stranded membrane-spanning segments follow: residues Lys174–Thr186, Phe189–Asn196, Glu200–Val209, Leu213–Thr222, Arg229–Leu238, and Ala242–Asn249. The residue at position 251 (Ser251) is a Phosphoserine. NAD(+)-binding positions include Leu253 to Gly255 and Ser271 to Asp275. The next 2 membrane-spanning stretches (beta stranded) occupy residues Leu253–Leu262 and Gly265–Val274. Residue Lys277 is modified to N6-acetyllysine; alternate. Lys277 is covalently cross-linked (Glycyl lysine isopeptide (Lys-Gly) (interchain with G-Cter in ubiquitin); alternate). The chain crosses the membrane as a beta stranded span at residues His284–Glu293.

Belongs to the eukaryotic mitochondrial porin family. As to quaternary structure, monomer, homodimer and higher order oligomers; formation of higher order structures is necessary for scramblase activity. Interacts with ARMC12 in a TBC1D21-dependent manner. Interacts with KLC3. Interacts with SPATA33. Interacts with PPP3CC in a SPATA33-dependent manner. Ubiquitinated by PRKN during mitophagy, leading to its degradation and enhancement of mitophagy. Deubiquitinated by USP30.

It localises to the mitochondrion outer membrane. Its subcellular location is the membrane. The catalysed reaction is chloride(in) = chloride(out). It catalyses the reaction K(+)(in) = K(+)(out). It carries out the reaction a 1,2-diacyl-sn-glycero-3-phospho-L-serine(in) = a 1,2-diacyl-sn-glycero-3-phospho-L-serine(out). The enzyme catalyses a 1,2-diacyl-sn-glycero-3-phosphocholine(in) = a 1,2-diacyl-sn-glycero-3-phosphocholine(out). The catalysed reaction is a 1,2-diacyl-sn-glycero-3-phospho-(1D-myo-inositol)(in) = a 1,2-diacyl-sn-glycero-3-phospho-(1D-myo-inositol)(out). Non-selective voltage-gated ion channel that mediates the transport of anions and cations through the mitochondrion outer membrane and plasma membrane. The channel adopts an open conformation at zero mV and a closed conformation at both positive and negative potentials. There are two populations of channels; the main that functions in a lower open-state conductance with lower ion selectivity, that switch, in a voltage-dependent manner, from the open to a low-conducting 'closed' state and the other that has a normal ion selectivity in the typical high conductance, 'open' state. Binds various lipids, including the sphingolipid ceramide, the phospholipid phosphatidylcholine, and the sterols cholesterol and oxysterol. Binding of ceramide promotes the mitochondrial outer membrane permeabilization (MOMP) apoptotic pathway. In terms of biological role, catalyzes the scrambling of phospholipids across the outer mitochondrial membrane; the mechanism is unrelated to channel activity and is capable of translocating both anionic and zwitterionic phospholipids. This is Non-selective voltage-gated ion channel VDAC2 from Bos taurus (Bovine).